A 201-amino-acid chain; its full sequence is Probable nicotinate-nucleotide adenylyltransferase (201 aa).

The protein belongs to the NadD family.

The catalysed reaction is nicotinate beta-D-ribonucleotide + ATP + H(+) = deamido-NAD(+) + diphosphate. It functions in the pathway cofactor biosynthesis; NAD(+) biosynthesis; deamido-NAD(+) from nicotinate D-ribonucleotide: step 1/1. Catalyzes the reversible adenylation of nicotinate mononucleotide (NaMN) to nicotinic acid adenine dinucleotide (NaAD). The sequence is that of Probable nicotinate-nucleotide adenylyltransferase from Clostridium botulinum (strain Loch Maree / Type A3).